We begin with the raw amino-acid sequence, 102 residues long: NADH-quinone oxidoreductase subunit K (102 aa).

3 helical membrane-spanning segments follow: residues 5 to 25, 31 to 51, and 66 to 86; these read IAHY…GIFL, IVIL…FVAF, and FVLT…VVFF.

Belongs to the complex I subunit 4L family. As to quaternary structure, NDH-1 is composed of 14 different subunits. Subunits NuoA, H, J, K, L, M, N constitute the membrane sector of the complex.

It is found in the cell inner membrane. The catalysed reaction is a quinone + NADH + 5 H(+)(in) = a quinol + NAD(+) + 4 H(+)(out). Its function is as follows. NDH-1 shuttles electrons from NADH, via FMN and iron-sulfur (Fe-S) centers, to quinones in the respiratory chain. The immediate electron acceptor for the enzyme in this species is believed to be ubiquinone. Couples the redox reaction to proton translocation (for every two electrons transferred, four hydrogen ions are translocated across the cytoplasmic membrane), and thus conserves the redox energy in a proton gradient. The polypeptide is NADH-quinone oxidoreductase subunit K (Mesorhizobium japonicum (strain LMG 29417 / CECT 9101 / MAFF 303099) (Mesorhizobium loti (strain MAFF 303099))).